Here is a 687-residue protein sequence, read N- to C-terminus: MAKDYLFEIGTEEMPAHVVPRSVSQLADRTRKFLKENGLKFKDIKTFSTPRRLTILVEDLAEKQDDIDEVKKGPAKKIAQDADGNWTKAAQGFARGQGMTTDDIYFEELKGTEYAYVHVQKEGKKASDILLGMSEIIKAMTFPTKMRWDSNDFEFVRPIHWLVSLFGNEVIPVKILDITAGRKTEGHRFLGDSVVLANADDYEDALKDQYVIANAEERKDMIVNQMDELVKENHWQVKPDRDLLEEVTYLVEYPTVFAGSFDEKYLNIPDEVLITSMKDNQRYFEVYDENGKLINHFIAVRNGNKDYLDNVISGNEKVLVARLDDAQFFYDEDRKYPLSHFVDRLKDVSFHDKIGSMAEKVQRVRMIGDYLAKRWNLPENVVKDFDRASELYKFDLVTQMVGEFAELQGVMGMHYARLAGEDEEVSVAIKEHYMPATAEGPLPETTVGSLLSIADKIDTIITFFGAGMIPTSSNDPYALRRYAYGIVRILLNEKWSLPFNEVLPEIISLLNGVTPARLPKSDVDQEIADFIRDRVKQYLQKNKFKYDIIDAVLASSQQDPSQILAAANVLQLHHDDEEFKPVVESLTRIDNILKKAKFKGNVEVDESLFEDNSEKELYVGVQNLQEIESLADLYQGFVQLQPVIDQYFDVNMIMDKNEKVKNNRLAQLYAVSELADRLGNLSKLVIK.

Belongs to the class-II aminoacyl-tRNA synthetase family. Tetramer of two alpha and two beta subunits.

Its subcellular location is the cytoplasm. It carries out the reaction tRNA(Gly) + glycine + ATP = glycyl-tRNA(Gly) + AMP + diphosphate. This chain is Glycine--tRNA ligase beta subunit, found in Lactobacillus acidophilus (strain ATCC 700396 / NCK56 / N2 / NCFM).